The following is a 372-amino-acid chain: Glutamine synthetase (372 aa).

The GS beta-grasp domain maps to 24–103; that stretch reads VIAEYVWVDG…VLAECFNSDG (80 aa). The GS catalytic domain occupies 110 to 372; that stretch reads HRHEANKLFQ…KEYERETNEQ (263 aa).

Belongs to the glutamine synthetase family. Homooctamer.

It localises to the cytoplasm. It catalyses the reaction L-glutamate + NH4(+) + ATP = L-glutamine + ADP + phosphate + H(+). The chain is Glutamine synthetase (GLN1) from Candida glabrata (strain ATCC 2001 / BCRC 20586 / JCM 3761 / NBRC 0622 / NRRL Y-65 / CBS 138) (Yeast).